A 276-amino-acid chain; its full sequence is MAKKITLPQCKEMKKQGKRLRMITAYDYPFARLVDESEIEIILVGDSLGMVVLGYDSTVPVTLDEMIHHCKPVVRGAPNTLVVADMPFGSYNVSKEDAIRNANRMLKESGIEAVKVEGGTRMAPTVRALVDAGIPVMGHIGLTPQTAAQLGGFKVQGKTEDAAQQLLEDALALESAGAFSIVIECVPAGLARTITASLSIPTIGIGAGPYCNGQVLVIQDLLGIYDRFVPKFVKQYAQTGPAIRAALNDYAREVADGVFPGPEHSFGMDDEMKGLY.

Residues aspartate 46 and aspartate 85 each coordinate Mg(2+). 3-methyl-2-oxobutanoate is bound by residues 46–47, aspartate 85, and lysine 115; that span reads DS. Position 117 (glutamate 117) interacts with Mg(2+). Glutamate 184 serves as the catalytic Proton acceptor.

It belongs to the PanB family. Homodecamer; pentamer of dimers. It depends on Mg(2+) as a cofactor.

It is found in the cytoplasm. The catalysed reaction is 3-methyl-2-oxobutanoate + (6R)-5,10-methylene-5,6,7,8-tetrahydrofolate + H2O = 2-dehydropantoate + (6S)-5,6,7,8-tetrahydrofolate. The protein operates within cofactor biosynthesis; (R)-pantothenate biosynthesis; (R)-pantoate from 3-methyl-2-oxobutanoate: step 1/2. In terms of biological role, catalyzes the reversible reaction in which hydroxymethyl group from 5,10-methylenetetrahydrofolate is transferred onto alpha-ketoisovalerate to form ketopantoate. The chain is 3-methyl-2-oxobutanoate hydroxymethyltransferase from Heliobacterium modesticaldum (strain ATCC 51547 / Ice1).